The chain runs to 204 residues: Large ribosomal subunit protein uL4 (204 aa).

The segment at 49–75 (TKGRSEVSGGGKKPWRQKGRGGARAGS) is disordered.

The protein belongs to the universal ribosomal protein uL4 family. In terms of assembly, part of the 50S ribosomal subunit.

One of the primary rRNA binding proteins, this protein initially binds near the 5'-end of the 23S rRNA. It is important during the early stages of 50S assembly. It makes multiple contacts with different domains of the 23S rRNA in the assembled 50S subunit and ribosome. Its function is as follows. Forms part of the polypeptide exit tunnel. In Campylobacter hominis (strain ATCC BAA-381 / DSM 21671 / CCUG 45161 / LMG 19568 / NCTC 13146 / CH001A), this protein is Large ribosomal subunit protein uL4.